We begin with the raw amino-acid sequence, 433 residues long: GTPase Obg (433 aa).

The Obg domain occupies 2-160 (PTFVDQTKIE…RVLRLELKLL (159 aa)). In terms of domain architecture, OBG-type G spans 161–334 (ADVGLVGFPS…LMNDTATLVE (174 aa)). GTP contacts are provided by residues 167-174 (GFPSVGKS), 192-196 (FTTLT), 214-217 (DLPG), 284-287 (SQMD), and 315-317 (SSV). 2 residues coordinate Mg(2+): Ser174 and Thr194. In terms of domain architecture, OCT spans 355–433 (YKAPQRNEFM…IGKFVFEFVQ (79 aa)).

Belongs to the TRAFAC class OBG-HflX-like GTPase superfamily. OBG GTPase family. Monomer. The cofactor is Mg(2+).

The protein localises to the cytoplasm. An essential GTPase which binds GTP, GDP and possibly (p)ppGpp with moderate affinity, with high nucleotide exchange rates and a fairly low GTP hydrolysis rate. Plays a role in control of the cell cycle, stress response, ribosome biogenesis and in those bacteria that undergo differentiation, in morphogenesis control. In Lactobacillus acidophilus (strain ATCC 700396 / NCK56 / N2 / NCFM), this protein is GTPase Obg.